The chain runs to 683 residues: Long-chain fatty acid transport protein 3 (683 aa).

Residues 3-23 (ALLLLPLLLLLPLLLLKLHLW) traverse the membrane as a helical segment. Over residues 119–128 (GGDSGEGSAG) the composition is skewed to gly residues. The interval 119-145 (GGDSGEGSAGEGERAAPGAGDAAAGSG) is disordered. Residues 133 to 145 (AAPGAGDAAAGSG) show a composition bias toward low complexity. ATP contacts are provided by residues 288–292 (TSGTT), His331, Thr428, Asp528, Arg543, and Lys635.

This sequence belongs to the ATP-dependent AMP-binding enzyme family. As to expression, expressed in bronchial and bronchiolar epithelial cells (at protein level).

The protein localises to the mitochondrion membrane. The enzyme catalyses a fatty acid(in) = a fatty acid(out). It carries out the reaction a long-chain fatty acid + ATP + CoA = a long-chain fatty acyl-CoA + AMP + diphosphate. The catalysed reaction is hexadecanoate + ATP + CoA = hexadecanoyl-CoA + AMP + diphosphate. It catalyses the reaction (9Z)-octadecenoate + ATP + CoA = (9Z)-octadecenoyl-CoA + AMP + diphosphate. The enzyme catalyses (9Z,12Z)-octadecadienoate + ATP + CoA = (9Z,12Z)-octadecadienoyl-CoA + AMP + diphosphate. It carries out the reaction (5Z,8Z,11Z,14Z)-eicosatetraenoate + ATP + CoA = (5Z,8Z,11Z,14Z)-eicosatetraenoyl-CoA + AMP + diphosphate. The catalysed reaction is a very long-chain fatty acid + ATP + CoA = a very long-chain fatty acyl-CoA + AMP + diphosphate. It catalyses the reaction tetracosanoate + ATP + CoA = tetracosanoyl-CoA + AMP + diphosphate. Mainly functions as an acyl-CoA ligase catalyzing the ATP-dependent formation of fatty acyl-CoA using LCFA and very-long-chain fatty acids (VLCFA) as substrates. Can mediate the levels of long-chain fatty acids (LCFA) in the cell by facilitating their transport across membranes. The sequence is that of Long-chain fatty acid transport protein 3 from Homo sapiens (Human).